Here is a 365-residue protein sequence, read N- to C-terminus: 3-isopropylmalate dehydrogenase (365 aa).

NAD(+) is bound at residue 80 to 93; that stretch reads GPKWADNTGDQRPE. Positions 100, 110, 138, and 223 each coordinate substrate. Asp-223, Asp-247, and Asp-251 together coordinate Mg(2+). 280–292 provides a ligand contact to NAD(+); sequence GSAPDIAGQDVAN. Residues 337–365 are disordered; it reads NEEDASTSAFGREVATRAADSVPQNAPTP.

It belongs to the isocitrate and isopropylmalate dehydrogenases family. LeuB type 1 subfamily. In terms of assembly, homodimer. The cofactor is Mg(2+). It depends on Mn(2+) as a cofactor.

It is found in the cytoplasm. It catalyses the reaction (2R,3S)-3-isopropylmalate + NAD(+) = 4-methyl-2-oxopentanoate + CO2 + NADH. It functions in the pathway amino-acid biosynthesis; L-leucine biosynthesis; L-leucine from 3-methyl-2-oxobutanoate: step 3/4. Catalyzes the oxidation of 3-carboxy-2-hydroxy-4-methylpentanoate (3-isopropylmalate) to 3-carboxy-4-methyl-2-oxopentanoate. The product decarboxylates to 4-methyl-2 oxopentanoate. This chain is 3-isopropylmalate dehydrogenase, found in Salinibacter ruber (strain DSM 13855 / M31).